A 492-amino-acid chain; its full sequence is 3-octaprenyl-4-hydroxybenzoate carboxy-lyase (492 aa).

Asparagine 175 provides a ligand contact to Mn(2+). Prenylated FMN contacts are provided by residues 178-180, 192-194, and 197-198; these read IYR, RWL, and RG. Glutamate 241 contacts Mn(2+). Aspartate 290 serves as the catalytic Proton donor.

This sequence belongs to the UbiD family. As to quaternary structure, homohexamer. The cofactor is prenylated FMN. Mn(2+) serves as cofactor.

It is found in the cell membrane. The enzyme catalyses a 4-hydroxy-3-(all-trans-polyprenyl)benzoate + H(+) = a 2-(all-trans-polyprenyl)phenol + CO2. Its pathway is cofactor biosynthesis; ubiquinone biosynthesis. In terms of biological role, catalyzes the decarboxylation of 3-octaprenyl-4-hydroxy benzoate to 2-octaprenylphenol, an intermediate step in ubiquinone biosynthesis. In Salmonella choleraesuis (strain SC-B67), this protein is 3-octaprenyl-4-hydroxybenzoate carboxy-lyase.